Here is a 490-residue protein sequence, read N- to C-terminus: Glutamate--tRNA ligase (490 aa).

The short motif at 9-19 is the 'HIGH' region element; that stretch reads PSPTGLQHIGG. A 'KMSKS' region motif is present at residues 251–255; that stretch reads KLSKR. Lysine 254 provides a ligand contact to ATP.

The protein belongs to the class-I aminoacyl-tRNA synthetase family. Glutamate--tRNA ligase type 1 subfamily. As to quaternary structure, monomer.

It is found in the cytoplasm. It carries out the reaction tRNA(Glu) + L-glutamate + ATP = L-glutamyl-tRNA(Glu) + AMP + diphosphate. Functionally, catalyzes the attachment of glutamate to tRNA(Glu) in a two-step reaction: glutamate is first activated by ATP to form Glu-AMP and then transferred to the acceptor end of tRNA(Glu). The sequence is that of Glutamate--tRNA ligase from Borreliella burgdorferi (strain ATCC 35210 / DSM 4680 / CIP 102532 / B31) (Borrelia burgdorferi).